A 227-amino-acid polypeptide reads, in one-letter code: Ubiquitin carboxyl-terminal hydrolase (227 aa).

The UCH catalytic domain maps to 3-224 (TWTPLESNPE…VRFTVLALTA (222 aa)). Cysteine 93 acts as the Nucleophile in catalysis. Residue histidine 164 is the Proton donor of the active site.

Belongs to the peptidase C12 family.

The enzyme catalyses Thiol-dependent hydrolysis of ester, thioester, amide, peptide and isopeptide bonds formed by the C-terminal Gly of ubiquitin (a 76-residue protein attached to proteins as an intracellular targeting signal).. In terms of biological role, ubiquitin-protein hydrolase is involved both in the processing of ubiquitin precursors and of ubiquitinated proteins. This enzyme is a thiol protease that recognizes and hydrolyzes a peptide bond at the C-terminal glycine of ubiquitin. This Drosophila melanogaster (Fruit fly) protein is Ubiquitin carboxyl-terminal hydrolase (Uch).